A 143-amino-acid chain; its full sequence is MAIERTFSIIKPNAVAKNVIGSIFSRFEAAGFKIVGTKMLHLTVEQARGFYAEHEGRPFFDGLVEFMTSGPIVVSVLEGENAVQRHRDLLGATNPANALAGTLRADYADSFTENGTHGSDSVESAAREIAFFFAEGEVCPRTR.

ATP is bound by residues lysine 11, phenylalanine 59, arginine 87, threonine 93, arginine 104, and asparagine 114. Residue histidine 117 is the Pros-phosphohistidine intermediate of the active site.

Belongs to the NDK family. Homotetramer. Requires Mg(2+) as cofactor.

It is found in the cytoplasm. The enzyme catalyses a 2'-deoxyribonucleoside 5'-diphosphate + ATP = a 2'-deoxyribonucleoside 5'-triphosphate + ADP. It catalyses the reaction a ribonucleoside 5'-diphosphate + ATP = a ribonucleoside 5'-triphosphate + ADP. Major role in the synthesis of nucleoside triphosphates other than ATP. The ATP gamma phosphate is transferred to the NDP beta phosphate via a ping-pong mechanism, using a phosphorylated active-site intermediate. This is Nucleoside diphosphate kinase from Klebsiella pneumoniae (strain 342).